The following is a 560-amino-acid chain: Dihydroxy-acid dehydratase (560 aa).

Aspartate 78 contacts Mg(2+). [2Fe-2S] cluster is bound at residue cysteine 119. Residues aspartate 120 and lysine 121 each coordinate Mg(2+). N6-carboxylysine is present on lysine 121. [2Fe-2S] cluster is bound at residue cysteine 192. Residue glutamate 446 coordinates Mg(2+). The Proton acceptor role is filled by serine 472.

The protein belongs to the IlvD/Edd family. In terms of assembly, homodimer. [2Fe-2S] cluster serves as cofactor. It depends on Mg(2+) as a cofactor.

It catalyses the reaction (2R)-2,3-dihydroxy-3-methylbutanoate = 3-methyl-2-oxobutanoate + H2O. The catalysed reaction is (2R,3R)-2,3-dihydroxy-3-methylpentanoate = (S)-3-methyl-2-oxopentanoate + H2O. The protein operates within amino-acid biosynthesis; L-isoleucine biosynthesis; L-isoleucine from 2-oxobutanoate: step 3/4. It participates in amino-acid biosynthesis; L-valine biosynthesis; L-valine from pyruvate: step 3/4. Its function is as follows. Functions in the biosynthesis of branched-chain amino acids. Catalyzes the dehydration of (2R,3R)-2,3-dihydroxy-3-methylpentanoate (2,3-dihydroxy-3-methylvalerate) into 2-oxo-3-methylpentanoate (2-oxo-3-methylvalerate) and of (2R)-2,3-dihydroxy-3-methylbutanoate (2,3-dihydroxyisovalerate) into 2-oxo-3-methylbutanoate (2-oxoisovalerate), the penultimate precursor to L-isoleucine and L-valine, respectively. The protein is Dihydroxy-acid dehydratase of Anaeromyxobacter dehalogenans (strain 2CP-C).